The primary structure comprises 208 residues: NAD-dependent protein deacylase (208 aa).

A Deacetylase sirtuin-type domain is found at 1–208 (MKPICVVLSG…NTGFNPVTGW (208 aa)). 10–29 (GAGISAESGIPTYRAEDGLW) contacts NAD(+). Residues tyrosine 54 and arginine 57 each coordinate substrate. An NAD(+)-binding site is contributed by 87–90 (QNVE). Histidine 105 (proton acceptor) is an active-site residue. NAD(+) contacts are provided by residues 170 to 172 (GTS) and 197 to 199 (NPN).

Belongs to the sirtuin family. Class III subfamily.

It is found in the cytoplasm. The enzyme catalyses N(6)-acetyl-L-lysyl-[protein] + NAD(+) + H2O = 2''-O-acetyl-ADP-D-ribose + nicotinamide + L-lysyl-[protein]. It catalyses the reaction N(6)-succinyl-L-lysyl-[protein] + NAD(+) + H2O = 2''-O-succinyl-ADP-D-ribose + nicotinamide + L-lysyl-[protein]. Functionally, NAD-dependent lysine deacetylase and desuccinylase that specifically removes acetyl and succinyl groups on target proteins. Modulates the activities of several proteins which are inactive in their acylated form. This is NAD-dependent protein deacylase from Aggregatibacter actinomycetemcomitans (Actinobacillus actinomycetemcomitans).